Consider the following 296-residue polypeptide: Putative mannose 6-phosphate receptor-like protein C530.09c (296 aa).

A signal peptide spans 1 to 25 (MRLLTCLINVLAGLTLFSQFQRAFG). Over 26–206 (LTITRRGFKV…TVKKDSTLNP (181 aa)) the chain is Lumenal. Residues 42–197 (PFCALHHPNT…EWKTIHACPT (156 aa)) enclose the MRH domain. A disulfide bridge links Cys44 with Cys87. Residues Asn64, Asn81, Asn93, Asn96, and Asn143 are each glycosylated (N-linked (GlcNAc...) asparagine). Disulfide bonds link Cys147–Cys183 and Cys163–Cys195. Residues 207–227 (VSVFLLFCAIAFLAYFVGGFV) traverse the membrane as a helical segment. The Cytoplasmic portion of the chain corresponds to 228–249 (YQRVVLNARGLRQIPNYEMWRS). Residues 250–270 (LFGFISDIVIILYSSILSILP) traverse the membrane as a helical segment. At 271 to 296 (SSITRMRGNRRNIDYVEDALIDDIDT) the chain is on the lumenal side.

It belongs to the MRL1/IGF2R family.

Its subcellular location is the golgi apparatus. The protein localises to the trans-Golgi network membrane. It is found in the endosome membrane. In Schizosaccharomyces pombe (strain 972 / ATCC 24843) (Fission yeast), this protein is Putative mannose 6-phosphate receptor-like protein C530.09c.